The sequence spans 261 residues: Spermatogenesis-associated protein 46 (261 aa).

Residues 140–159 (SSSSSPENTCPREATKKSRH) are disordered.

In terms of tissue distribution, testis-specific.

The protein localises to the nucleus membrane. Functionally, plays a role in spermiogenesis and fertilization. The polypeptide is Spermatogenesis-associated protein 46 (Homo sapiens (Human)).